The chain runs to 1047 residues: Ras GTPase-activating protein 1 (1047 aa).

The residue at position 1 (Met-1) is an N-acetylmethionine. The 92-residue stretch at 181–272 folds into the SH2 1 domain; it reads WYHGKLDRTI…LKGEKLLYPV (92 aa). Residues 279-341 form the SH3 domain; it reads EDRRRVRAIL…VEDLVEEVGR (63 aa). Residues 351–441 form the SH2 2 domain; sequence WFHGKISKQE…VEGYYLKEPV (91 aa). Positions 474–577 constitute a PH domain; that stretch reads NIVKKGYLLK…WMKGLQAFCN (104 aa). The C2 domain occupies 577–690; sequence NLRKSSPGTS…QKGHATDEWF (114 aa). A Phosphotyrosine modification is found at Tyr-615. Positions 764-974 constitute a Ras-GAP domain; the sequence is KLESLLLCTL…HRMIMFLDEL (211 aa). At Ser-831 the chain carries Phosphoserine.

In terms of assembly, interacts with SQSTM1. Interacts with SPSB1; the interaction does not promote degradation. Interacts with CAV2 (tyrosine phosphorylated form). Directly interacts with NCK1. Interacts with PDGFRB (tyrosine phosphorylated). Interacts (via SH2 domain) with the 'Tyr-9' phosphorylated form of PDPK1. Interacts with tyrosine-phosphorylated EPHB4. In terms of processing, the N-terminus is blocked. Post-translationally, phosphorylated by SRC and LCK. The phosphorylation SRC inhibits its ability to stimulate the Ras-GTPase activity, whereas phosphorylation by LCK does not display any effect on stimulation activity. As to expression, in placental villi, detected only in the trophoblast layer (cytotrophoblast and syncytiotrophoblast). Not detected in stromal, endothelial or Hofbauer cells (at protein level).

The protein localises to the cytoplasm. Functionally, inhibitory regulator of the Ras-cyclic AMP pathway. Stimulates the GTPase of normal but not oncogenic Ras p21; this stimulation may be further increased in the presence of NCK1. The protein is Ras GTPase-activating protein 1 (RASA1) of Homo sapiens (Human).